The following is a 544-amino-acid chain: POTE ankyrin domain family member B2 (544 aa).

ANK repeat units lie at residues 135 to 167 (QKRT…VLDN), 168 to 200 (KKRT…IQDE), 201 to 233 (YGNT…SKNK), 234 to 266 (CGLT…ALDR), and 267 to 299 (YGRT…SQDL). Residues 332–457 (SSENSNPEQD…NTGISQDEIL (126 aa)) form a disordered region. Basic and acidic residues-rich tracts occupy residues 340-355 (QDLK…RLKV) and 364-375 (MSQEPEINKDCD). Residues 439–457 (TQKQLSEEQNTGISQDEIL) show a composition bias toward polar residues.

Belongs to the POTE family.

This chain is POTE ankyrin domain family member B2 (POTEB2), found in Homo sapiens (Human).